We begin with the raw amino-acid sequence, 689 residues long: DNA polymerase epsilon subunit B (689 aa).

Over residues 98-115 (EWSHEHPIQHEENILGRT) the composition is skewed to basic and acidic residues. The segment at 98-155 (EWSHEHPIQHEENILGRTDDDENNSDDEMPIAADSSLQNVSLSSPMRQPTERDEYKQP) is disordered. Residues 116-126 (DDDENNSDDEM) are compositionally biased toward acidic residues. Residue Ser-122 is modified to Phosphoserine. The segment covering 132-144 (SSLQNVSLSSPMR) has biased composition (polar residues). Ser-141 carries the post-translational modification Phosphoserine; by CDC28. A compositionally biased stretch (basic and acidic residues) spans 146-155 (PTERDEYKQP). Ser-613 carries the phosphoserine modification.

This sequence belongs to the DNA polymerase epsilon subunit B family. In terms of assembly, DNA polymerase epsilon is a heterotetramer consisting of POL2, DPB2, DPB3 and DPB4. Post-translationally, phosphorylated in a cell cycle dependent manner during late G1 phase. Phosphorylation may facilitate the interaction with POL2 or the activity of DNA polymerase II. Phosphorylation is independent of DNA replication but dependent upon CDC28 in vivo. Both Ser-141 and Ser-613 are phosphorylated in vivo, but in vitro only Ser-141 is phosphorylated by CDC28.

The protein resides in the cytoplasm. It is found in the nucleus. As accessory component of the DNA polymerase epsilon complex participates in chromosomal DNA replication. It is required during synthesis of the leading and lagging DNA strands at the replication fork and binds at/or near replication origins and moves along DNA with the replication fork. It has 3'-5' proofreading exonuclease activity that correct errors arising during DNA replication. It is also involved in DNA synthesis during DNA repair. This chain is DNA polymerase epsilon subunit B (DPB2), found in Saccharomyces cerevisiae (strain ATCC 204508 / S288c) (Baker's yeast).